The chain runs to 589 residues: MSQRVRRNGSPTPAGSLGGGAVATAGGPGSRLQPMRATVPFQLKQQQQQQHGSPTRSGGGGGGNNNGGCCGGASGPAGGGGGGGPRTASRSTSPTRGGGNAAARTSPTVATQTGASATSTRGTSPTRSAAPGARGSPPRPPPPPPLLGTVSSPSSSPTHLWTGEVSAAPPPARVRHRRRSPEQSRSSPEKRSPSAPVCKAGDKTRQPSSSPSSIIRRTSSLDTLAAPYLAGHWPRDSHGQAAPCMRDKATQTESAWAEEYSEKKKGSHKRSASWGSTDQLKEIAKLRQQLQRSKHSSRHHRDKERQSPFHGNHAAINQCQAPVPKSALIPVIPITKSTGSRFRNSVEGLNQEIEIIIKETGEKEEQLIPQDIPDGHRAPPPLVQRSSSTRSIDTQTPGGADRGSNNSSRSQSVSPTSFLTISNEGSEESPCSADDLLVDPRDKENGNNSPLPKYATSPKPNNSYMFKREPPEGCERVKVFEECSPKQLHEIPAFYCPDKNKVNFIPKSGSAFCLVSILKPLLPTPDLTLKGSGHSLTVTTGMTTTLLQPIAVASLSTNTEQDRVSRGTSTVMPSASLLPPPEPIEEAEG.

The tract at residues 1 to 310 (MSQRVRRNGS…RDKERQSPFH (310 aa)) is disordered. A Phosphoserine modification is found at serine 10. Positions 16-29 (SLGGGAVATAGGPG) are enriched in gly residues. A compositionally biased stretch (low complexity) spans 45–56 (QQQQQQHGSPTR). The segment covering 57 to 85 (SGGGGGGNNNGGCCGGASGPAGGGGGGGP) has biased composition (gly residues). Serine 106 carries the phosphoserine modification. A compositionally biased stretch (low complexity) spans 108-136 (TVATQTGASATSTRGTSPTRSAAPGARGS). A compositionally biased stretch (pro residues) spans 137 to 146 (PPRPPPPPPL). Low complexity-rich tracts occupy residues 147-158 (LGTVSSPSSSPT) and 207-220 (PSSS…RTSS). A phosphoserine mark is found at serine 210, serine 219, serine 220, and serine 273. Residues 292–302 (RSKHSSRHHRD) show a composition bias toward basic residues. A phosphoserine mark is found at serine 345 and serine 391. Disordered stretches follow at residues 370–464 (QDIP…NNSY) and 556–589 (STNT…EAEG). Residues 384 to 397 (QRSSSTRSIDTQTP) are compositionally biased toward polar residues. Residues 404–417 (SNNSSRSQSVSPTS) show a composition bias toward low complexity. 2 positions are modified to phosphoserine: serine 449 and serine 457.

The polypeptide is Protein FAM117B (FAM117B) (Homo sapiens (Human)).